The sequence spans 299 residues: Probable plastid-lipid-associated protein 13, chloroplastic (299 aa).

The transit peptide at 1–48 (MALIHGSVPGTSAVRLVFSTSASPSRFCLNVPVVKQGWKNSCRRRVLR) directs the protein to the chloroplast. The residue at position 2 (Ala-2) is an N-acetylvaline.

This sequence belongs to the PAP/fibrillin family.

Its subcellular location is the plastid. It is found in the chloroplast. It localises to the plastoglobule. This is Probable plastid-lipid-associated protein 13, chloroplastic (PAP13) from Arabidopsis thaliana (Mouse-ear cress).